The primary structure comprises 114 residues: NADH-ubiquinone oxidoreductase chain 3 (114 aa).

The next 3 membrane-spanning stretches (helical) occupy residues 3 to 23, 52 to 72, and 86 to 106; these read LITL…INTY, IQFF…VLLL, and TILL…YEWL.

It belongs to the complex I subunit 3 family.

The protein resides in the mitochondrion membrane. The catalysed reaction is a ubiquinone + NADH + 5 H(+)(in) = a ubiquinol + NAD(+) + 4 H(+)(out). Core subunit of the mitochondrial membrane respiratory chain NADH dehydrogenase (Complex I) that is believed to belong to the minimal assembly required for catalysis. Complex I functions in the transfer of electrons from NADH to the respiratory chain. The immediate electron acceptor for the enzyme is believed to be ubiquinone. This is NADH-ubiquinone oxidoreductase chain 3 (MT-ND3) from Lycodon semicarinatus (Ryukyu odd-tooth snake).